The primary structure comprises 557 residues: Putative sensory transducer protein (557 aa).

Residues 122–145 (TASTVMIVVIFVGILIAIALGVFI) traverse the membrane as a helical segment. The region spanning 147–199 (RIISKPIGQMVEAADRLALGDVEVDVKAETRDEIGKLAESFKRMIENIREQAY) is the HAMP domain. Residues 243-472 (VAAQVAAGAK…ESAAASEELS (230 aa)) form the Methyl-accepting transducer domain. A Glutamate methyl ester (Gln) modification is found at Gln268. Residue Glu274 is modified to Glutamate methyl ester (Glu). Gln281 is subject to Glutamate methyl ester (Gln). Glu463 carries the glutamate methyl ester (Glu) modification. The span at 511 to 541 (DYTENKQPKSYSKEENGEYSDGKETAEKDVG) shows a compositional bias: basic and acidic residues. Residues 511–542 (DYTENKQPKSYSKEENGEYSDGKETAEKDVGG) are disordered.

Belongs to the methyl-accepting chemotaxis (MCP) protein family.

The protein resides in the cell membrane. In terms of biological role, may bind attractants or detect changes in the extracellular concentration of soluble sugars. This chain is Putative sensory transducer protein, found in Acetivibrio thermocellus (strain ATCC 27405 / DSM 1237 / JCM 9322 / NBRC 103400 / NCIMB 10682 / NRRL B-4536 / VPI 7372) (Clostridium thermocellum).